We begin with the raw amino-acid sequence, 147 residues long: Hemoglobin subunit deltaH (147 aa).

The region spanning 3–147 is the Globin domain; sequence RLTDSEKAEV…MANALAHKYH (145 aa). Positions 64 and 93 each coordinate heme b.

It belongs to the globin family. In terms of assembly, heterotetramer of two delta chains and two alpha chains. In terms of tissue distribution, red blood cells.

The chain is Hemoglobin subunit deltaH (HBD) from Dendrohyrax dorsalis (Beecroft's tree hyrax).